Consider the following 397-residue polypeptide: CCA-adding enzyme (397 aa).

Positions 27 and 30 each coordinate ATP. 2 residues coordinate CTP: Gly27 and Arg30. Positions 40 and 42 each coordinate Mg(2+). Residues Arg111, Asp154, Arg157, Arg160, and Arg163 each contribute to the ATP site. CTP-binding residues include Arg111, Asp154, Arg157, Arg160, and Arg163.

It belongs to the tRNA nucleotidyltransferase/poly(A) polymerase family. Bacterial CCA-adding enzyme type 3 subfamily. In terms of assembly, homodimer. Requires Mg(2+) as cofactor.

The enzyme catalyses a tRNA precursor + 2 CTP + ATP = a tRNA with a 3' CCA end + 3 diphosphate. It carries out the reaction a tRNA with a 3' CCA end + 2 CTP + ATP = a tRNA with a 3' CCACCA end + 3 diphosphate. In terms of biological role, catalyzes the addition and repair of the essential 3'-terminal CCA sequence in tRNAs without using a nucleic acid template. Adds these three nucleotides in the order of C, C, and A to the tRNA nucleotide-73, using CTP and ATP as substrates and producing inorganic pyrophosphate. tRNA 3'-terminal CCA addition is required both for tRNA processing and repair. Also involved in tRNA surveillance by mediating tandem CCA addition to generate a CCACCA at the 3' terminus of unstable tRNAs. While stable tRNAs receive only 3'-terminal CCA, unstable tRNAs are marked with CCACCA and rapidly degraded. The polypeptide is CCA-adding enzyme (Anoxybacillus flavithermus (strain DSM 21510 / WK1)).